The sequence spans 432 residues: Adenylosuccinate synthetase (432 aa).

GTP is bound by residues Gly13–Lys19 and Gly41–Thr43. The active-site Proton acceptor is the Asp14. Residues Asp14 and Gly41 each contribute to the Mg(2+) site. IMP contacts are provided by residues Asp14 to Lys17, Asn39 to His42, Thr130, Arg144, Gln225, Thr240, and Arg304. Residue His42 is the Proton donor of the active site. A substrate-binding site is contributed by Ala300 to Arg306. GTP is bound by residues Arg306, Lys332–Asp334, and Ser415–Gly417.

Belongs to the adenylosuccinate synthetase family. Homodimer. Requires Mg(2+) as cofactor.

The protein localises to the cytoplasm. It catalyses the reaction IMP + L-aspartate + GTP = N(6)-(1,2-dicarboxyethyl)-AMP + GDP + phosphate + 2 H(+). It functions in the pathway purine metabolism; AMP biosynthesis via de novo pathway; AMP from IMP: step 1/2. Its function is as follows. Plays an important role in the de novo pathway of purine nucleotide biosynthesis. Catalyzes the first committed step in the biosynthesis of AMP from IMP. The sequence is that of Adenylosuccinate synthetase from Salmonella arizonae (strain ATCC BAA-731 / CDC346-86 / RSK2980).